Reading from the N-terminus, the 252-residue chain is MACSPLEQFAIIQLIPIHIGNLYFSFTNSSLFMLLTISLVLLLVHFVTLNGGNLVPNAWQSFVEMIYDFVLNLVNEQISGASSVKQRFFPLIYVTFTFLLFCNLIGMIPYSFTVTSHFIITLGLSFSLFIGITIVGFQTHGLHFFSILLPQGVPLPLAPFLVLLELISYCFRALSLGIRLFANMMAGHSLVKILSGFAWTMLSMGGILYLGQLAPFFIVFALTGLELGVAILQAYVFTILLCIYLNDAINLH.

7 helical membrane-spanning segments follow: residues 6–26, 31–51, 88–108, 117–137, 144–164, 190–212, and 225–245; these read LEQF…YFSF, LFML…TLNG, FFPL…IGMI, HFII…IVGF, FFSI…LVLL, LVKI…YLGQ, and LELG…CIYL.

Belongs to the ATPase A chain family. As to quaternary structure, F-type ATPases have 2 components, CF(1) - the catalytic core - and CF(0) - the membrane proton channel. CF(1) has five subunits: alpha(3), beta(3), gamma(1), delta(1), epsilon(1). CF(0) has three main subunits: a, b and c.

The protein resides in the mitochondrion inner membrane. Mitochondrial membrane ATP synthase (F(1)F(0) ATP synthase or Complex V) produces ATP from ADP in the presence of a proton gradient across the membrane which is generated by electron transport complexes of the respiratory chain. F-type ATPases consist of two structural domains, F(1) - containing the extramembraneous catalytic core and F(0) - containing the membrane proton channel, linked together by a central stalk and a peripheral stalk. During catalysis, ATP synthesis in the catalytic domain of F(1) is coupled via a rotary mechanism of the central stalk subunits to proton translocation. Key component of the proton channel; it may play a direct role in the translocation of protons across the membrane. The protein is ATP synthase subunit a (ATP6) of Marchantia polymorpha (Common liverwort).